The sequence spans 560 residues: Calcium-binding and coiled-coil domain-containing protein 1-A (560 aa).

Coiled-coil stretches lie at residues 156–192 (KATFLQNQLEMAQKERNDLMRARLALEEEVISKEKRI) and 367–480 (WWQE…DKML). Residues 480–517 (LMEDKTDSSPPTLSVDLSDSDDESPGDEGVSQQLGPCS) form a disordered region. Over residues 487 to 496 (SSPPTLSVDL) the composition is skewed to low complexity.

It belongs to the CALCOCO family.

Its subcellular location is the cytoplasm. It localises to the nucleus. In terms of biological role, may function as a coactivator for aryl hydrocarbon and nuclear receptors. The sequence is that of Calcium-binding and coiled-coil domain-containing protein 1-A (calcoco1-a) from Xenopus laevis (African clawed frog).